The primary structure comprises 721 residues: Cytosolic carboxypeptidase 2 (721 aa).

Residues 43 to 71 (TASDMINSSSPSESSDSNLEEEQEESKPC) form a disordered region. Residues 50-59 (SSSPSESSDS) are compositionally biased toward low complexity. The 272-residue stretch at 334 to 605 (YPYTYSKLQH…CFCDTLLDFC (272 aa)) folds into the Peptidase M14 domain. Zn(2+)-binding residues include His-400, Glu-403, and His-496. Glu-569 (proton donor/acceptor) is an active-site residue. The disordered stretch occupies residues 645-721 (DIESSTSGSN…TQHGDTEDQS (77 aa)). Positions 647–660 (ESSTSGSNSTESDG) are enriched in low complexity. A compositionally biased stretch (basic residues) spans 672–688 (GKKKLLRSRKERNRLRQ). Residues 703 to 714 (YSCQTLNATTQH) are compositionally biased toward polar residues.

It belongs to the peptidase M14 family. Zn(2+) serves as cofactor.

The protein localises to the cytoplasm. The protein resides in the cytosol. It localises to the cytoskeleton. Its subcellular location is the microtubule organizing center. It is found in the centrosome. The protein localises to the centriole. The protein resides in the cilium basal body. The catalysed reaction is (L-glutamyl)(n+1)-gamma-L-glutamyl-L-glutamyl-[protein] + H2O = (L-glutamyl)(n)-gamma-L-glutamyl-L-glutamyl-[protein] + L-glutamate. In terms of biological role, metallocarboxypeptidase that mediates deglutamylation of target proteins. Catalyzes the deglutamylation of polyglutamate side chains generated by post-translational polyglutamylation in proteins such as tubulins. Also removes gene-encoded polyglutamates from the carboxy-terminus of target proteins such as MYLK. Does not show detyrosinase or deglycylase activities from the carboxy-terminus of tubulin. Its function is as follows. Metallocarboxypeptidase that mediates deglutamylation of tubulin and non-tubulin target proteins. Catalyzes the removal of polyglutamate side chains present on the gamma-carboxyl group of glutamate residues within the C-terminal tail of tubulin protein. Specifically cleaves tubulin long-side-chains, while it is not able to remove the branching point glutamate. Also catalyzes the removal of polyglutamate residues from the carboxy-terminus of non-tubulin proteins. The chain is Cytosolic carboxypeptidase 2 (zte25) from Danio rerio (Zebrafish).